We begin with the raw amino-acid sequence, 541 residues long: Atrial natriuretic peptide receptor 3 (541 aa).

Residues 1–26 form the signal peptide; that stretch reads MPSLLVLTFSPCVLLGWALLAGGTGG. Topologically, residues 27–481 are extracellular; that stretch reads GGVGGGGGGA…PCKSSGGLEE (455 aa). N-linked (GlcNAc...) (complex) asparagine glycosylation is present at N86. Chloride-binding residues include S106, V135, and C136. 2 disulfides stabilise this stretch: C108/C136 and C213/C261. The N-linked (GlcNAc...) (high mannose) asparagine glycan is linked to N293. N-linked (GlcNAc...) (complex) asparagine glycosylation is present at N394. Residues 482–504 traverse the membrane as a helical segment; sequence SAVTGIVVGALLGAGLLMAFYFF. The Cytoplasmic segment spans residues 505–541; sequence RKKYRITIERRTQQEESNLGKHRELREDSIRSHFSVA.

This sequence belongs to the ANF receptor family. Homodimer; disulfide-linked. Dimers can also be formed through the C-terminal cysteine of isoform 2. Interacts with OSTN.

Its subcellular location is the cell membrane. Its function is as follows. Receptor for the natriuretic peptide hormones, binding with similar affinities atrial natriuretic peptide NPPA/ANP, brain natriuretic peptide NPPB/BNP, and C-type natriuretic peptide NPPC/CNP. May function as a clearance receptor for NPPA, NPPB and NPPC, regulating their local concentrations and effects. Acts as a regulator of osteoblast differentiation and bone growth by binding to its ligand osteocrin, thereby preventing binding between NPR3/NPR-C and natriuretic peptides, leading to increase cGMP production. The chain is Atrial natriuretic peptide receptor 3 (NPR3) from Homo sapiens (Human).